Consider the following 359-residue polypeptide: Dihydroorotate dehydrogenase (quinone) (359 aa).

FMN-binding positions include 68 to 72 (AGFDK) and Thr-92. Lys-72 serves as a coordination point for substrate. Substrate is bound at residue 117-121 (NRMGF). The FMN site is built by Asn-145 and Asn-176. Substrate is bound at residue Asn-176. The active-site Nucleophile is the Ser-179. Asn-181 is a binding site for substrate. Lys-212 and Thr-240 together coordinate FMN. Substrate is bound at residue 241 to 242 (NT). Residues Gly-266, Gly-295, and 316–317 (YT) each bind FMN.

This sequence belongs to the dihydroorotate dehydrogenase family. Type 2 subfamily. As to quaternary structure, monomer. FMN serves as cofactor.

It localises to the cell membrane. The catalysed reaction is (S)-dihydroorotate + a quinone = orotate + a quinol. Its pathway is pyrimidine metabolism; UMP biosynthesis via de novo pathway; orotate from (S)-dihydroorotate (quinone route): step 1/1. Its function is as follows. Catalyzes the conversion of dihydroorotate to orotate with quinone as electron acceptor. The polypeptide is Dihydroorotate dehydrogenase (quinone) (Corynebacterium striatum).